Here is a 215-residue protein sequence, read N- to C-terminus: ER lumen protein-retaining receptor 3 (215 aa).

Residues 1-4 (MNIF) lie on the Lumenal side of the membrane. Residues 5-24 (RLSGDVCHLIAIIILFLKIW) form a helical membrane-spanning segment. Residues 25 to 32 (RSKSCAGI) are Cytoplasmic-facing. The chain crosses the membrane as a helical span at residues 33–52 (SGKSQVLFALVFTTRYLDLF). The tract at residues 47 to 48 (RY) is interaction with the K-D-E-L motif on target proteins. Residues 53–58 (TSYISA) lie on the Lumenal side of the membrane. Residues 59–79 (YNTVMKVVYLLLAYSTVGLIF) traverse the membrane as a helical segment. Over 80–92 (FRFRNSYDSESDS) the chain is Cytoplasmic. Residues 93-110 (FRVEFLLVPVAGLSFLEN) form a helical membrane-spanning segment. At 111 to 116 (YAFTPL) the chain is on the lumenal side. A helical transmembrane segment spans residues 117-135 (EILWTFSIYLESVAILPQL). Topologically, residues 136–149 (FMITKTGEAESITA) are cytoplasmic. The helical transmembrane segment at 150–168 (HYLLFLGLYRALYLANWLW) threads the bilayer. The interval 159–169 (RALYLANWLWR) is interaction with the K-D-E-L motif on target proteins. Residues 169–178 (RFHTEGFYDQ) are Lumenal-facing. A helical membrane pass occupies residues 179 to 199 (IAVVSGVVQTIFYCDFFYLYF). The Cytoplasmic portion of the chain corresponds to 200–215 (TRVLRGSGKMSLPMPV). Residues 204–208 (RGSGK) form an important for recycling of cargo proteins with the sequence motif K-D-E-L from the Golgi to the endoplasmic reticulum region.

This sequence belongs to the ERD2 family.

Its subcellular location is the endoplasmic reticulum membrane. The protein localises to the golgi apparatus membrane. It is found in the cytoplasmic vesicle. The protein resides in the COPI-coated vesicle membrane. Functionally, receptor for the C-terminal sequence motif K-D-E-L that is present on endoplasmic reticulum resident proteins and that mediates their recycling from the Golgi back to the endoplasmic reticulum. The protein is ER lumen protein-retaining receptor 3 (kdelr3) of Danio rerio (Zebrafish).